Consider the following 335-residue polypeptide: Delta(7)-sterol 5(6)-desaturase erg3B (335 aa).

Transmembrane regions (helical) follow at residues 74–94, 113–133, and 152–172; these read IWAF…ALVF, IGQA…LFLA, and LYTY…IYWI. A Fatty acid hydroxylase domain is found at 160-284; the sequence is LFIAFTDFAI…FITFWDRIGG (125 aa). Residues 173 to 177 carry the Histidine box-1 motif; it reads HRGLH. The Histidine box-2 motif lies at 186–190; that stretch reads HKPHH. A helical membrane pass occupies residues 219-239; that stretch reads PFLFPLQKAAYLGLFVFVTIW. N-linked (GlcNAc...) asparagine glycosylation is present at N256. Residues 261 to 265 carry the Histidine box-3 motif; it reads HTIHH.

The protein belongs to the sterol desaturase family. It depends on Fe cation as a cofactor.

The protein localises to the endoplasmic reticulum membrane. It functions in the pathway steroid metabolism; ergosterol biosynthesis. Delta(7)-sterol 5(6)-desaturase; part of the third module of ergosterol biosynthesis pathway that includes the late steps of the pathway. Erg3B catalyzes the introduction of a C-5 double bond in the B ring to produce 5-dehydroepisterol. The third module or late pathway involves the ergosterol synthesis itself through consecutive reactions that mainly occur in the endoplasmic reticulum (ER) membrane. Firstly, the squalene synthase erg9 catalyzes the condensation of 2 farnesyl pyrophosphate moieties to form squalene, which is the precursor of all steroids. Squalene synthase is crucial for balancing the incorporation of farnesyl diphosphate (FPP) into sterol and nonsterol isoprene synthesis. Secondly, squalene is converted into lanosterol by the consecutive action of the squalene epoxidase erg1 and the lanosterol synthase erg7. Then, the delta(24)-sterol C-methyltransferase erg6 methylates lanosterol at C-24 to produce eburicol. Eburicol is the substrate of the sterol 14-alpha demethylase encoded by cyp51A and cyp51B, to yield 4,4,24-trimethyl ergosta-8,14,24(28)-trienol. The C-14 reductase erg24 then reduces the C14=C15 double bond which leads to 4,4-dimethylfecosterol. A sequence of further demethylations at C-4, involving the C-4 demethylation complex containing the C-4 methylsterol oxidases erg25A or erg25B, the sterol-4-alpha-carboxylate 3-dehydrogenase erg26 and the 3-keto-steroid reductase erg27, leads to the production of fecosterol via 4-methylfecosterol. The C-8 sterol isomerase erg2 then catalyzes the reaction which results in unsaturation at C-7 in the B ring of sterols and thus converts fecosterol to episterol. The sterol-C5-desaturase erg3B then catalyzes the introduction of a C-5 double bond in the B ring to produce 5-dehydroepisterol. The 2 other sterol-C5-desaturases, erg3A and erg3C, seem to be less important in ergosterol biosynthesis. The C-22 sterol desaturase erg5 further converts 5-dehydroepisterol into ergosta-5,7,22,24(28)-tetraen-3beta-ol by forming the C-22(23) double bond in the sterol side chain. Finally, ergosta-5,7,22,24(28)-tetraen-3beta-ol is substrate of the C-24(28) sterol reductases erg4A and erg4B to produce ergosterol. Possible alternative sterol biosynthetic pathways might exist from fecosterol to ergosterol, depending on the activities of the erg3 isoforms. The chain is Delta(7)-sterol 5(6)-desaturase erg3B from Aspergillus fumigatus (strain ATCC MYA-4609 / CBS 101355 / FGSC A1100 / Af293) (Neosartorya fumigata).